The primary structure comprises 387 residues: Galactokinase (387 aa).

33-36 is a substrate binding site; that stretch reads EHID. ATP contacts are provided by residues Ser67 and 124-130; that span reads GAGLSSS. Residues Ser130 and Glu162 each contribute to the Mg(2+) site. The Proton acceptor role is filled by Asp174. Tyr224 lines the substrate pocket.

It belongs to the GHMP kinase family. GalK subfamily.

Its subcellular location is the cytoplasm. It carries out the reaction alpha-D-galactose + ATP = alpha-D-galactose 1-phosphate + ADP + H(+). It participates in carbohydrate metabolism; galactose metabolism. Its function is as follows. Catalyzes the transfer of the gamma-phosphate of ATP to D-galactose to form alpha-D-galactose-1-phosphate (Gal-1-P). In Clostridium perfringens (strain ATCC 13124 / DSM 756 / JCM 1290 / NCIMB 6125 / NCTC 8237 / Type A), this protein is Galactokinase.